Reading from the N-terminus, the 238-residue chain is tRNA1(Val) (adenine(37)-N6)-methyltransferase (238 aa).

Belongs to the methyltransferase superfamily. tRNA (adenine-N(6)-)-methyltransferase family.

It is found in the cytoplasm. The catalysed reaction is adenosine(37) in tRNA1(Val) + S-adenosyl-L-methionine = N(6)-methyladenosine(37) in tRNA1(Val) + S-adenosyl-L-homocysteine + H(+). In terms of biological role, specifically methylates the adenine in position 37 of tRNA(1)(Val) (anticodon cmo5UAC). The protein is tRNA1(Val) (adenine(37)-N6)-methyltransferase of Shewanella sp. (strain W3-18-1).